The primary structure comprises 295 residues: Sulfotransferase 1A1 (295 aa).

Position 48–53 (48–53 (KSGTTW)) interacts with 3'-phosphoadenylyl sulfate. 106–108 (KTH) is a binding site for substrate. Histidine 108 acts as the Proton acceptor in catalysis. 3'-phosphoadenylyl sulfate contacts are provided by residues arginine 130, serine 138, tyrosine 193, 227 to 232 (TSFKEM), and 255 to 259 (FMRKG). At serine 138 the chain carries Phosphoserine.

The protein belongs to the sulfotransferase 1 family. As to quaternary structure, homodimer.

The protein resides in the cytoplasm. It carries out the reaction a phenol + 3'-phosphoadenylyl sulfate = an aryl sulfate + adenosine 3',5'-bisphosphate + H(+). The enzyme catalyses 17beta-estradiol + 3'-phosphoadenylyl sulfate = 17beta-estradiol 3-sulfate + adenosine 3',5'-bisphosphate + H(+). The catalysed reaction is 4-ethylphenol + 3'-phosphoadenylyl sulfate = 4-ethylphenyl sulfate + adenosine 3',5'-bisphosphate + H(+). It catalyses the reaction 4-nitrophenol + 3'-phosphoadenylyl sulfate = 4-nitrophenyl sulfate + adenosine 3',5'-bisphosphate. It carries out the reaction dopamine + 3'-phosphoadenylyl sulfate = dopamine 3-O-sulfate + adenosine 3',5'-bisphosphate + H(+). The enzyme catalyses dopamine + 3'-phosphoadenylyl sulfate = dopamine 4-O-sulfate + adenosine 3',5'-bisphosphate + H(+). The catalysed reaction is 3,3',5-triiodo-L-thyronine + 3'-phosphoadenylyl sulfate = 3,3',5-triiodo-L-thyronine sulfate + adenosine 3',5'-bisphosphate + H(+). It catalyses the reaction 3,3',5'-triiodo-L-thyronine + 3'-phosphoadenylyl sulfate = 3,3',5'-triiodo-L-thyronine sulfate + adenosine 3',5'-bisphosphate + H(+). It carries out the reaction 3,3'-diiodo-L-thyronine + 3'-phosphoadenylyl sulfate = 3,3'-diiodo-L-thyronine sulfate + adenosine 3',5'-bisphosphate + H(+). The enzyme catalyses L-thyroxine + 3'-phosphoadenylyl sulfate = L-thyroxine sulfate + adenosine 3',5'-bisphosphate + H(+). Its function is as follows. Sulfotransferase that utilizes 3'-phospho-5'-adenylyl sulfate (PAPS) as sulfonate donor to catalyze the sulfate conjugation of a wide variety of acceptor molecules bearing a hydroxyl or an amine group. Sulfonation increases the water solubility of most compounds, and therefore their renal excretion, but it can also result in bioactivation to form active metabolites. Displays broad substrate specificity for small phenolic compounds. Plays an important role in the sulfonation of endogenous molecules such as steroid hormones. Mediates also the metabolic activation of carcinogenic N-hydroxyarylamines leading to highly reactive intermediates capable of forming DNA adducts, potentially resulting in mutagenesis. May play a role in gut microbiota-host metabolic interaction. O-sulfonates 4-ethylphenol (4-EP), a dietary tyrosine-derived metabolite produced by gut bacteria. The product 4-EPS crosses the blood-brain barrier and may negatively regulate oligodendrocyte maturation and myelination, affecting the functional connectivity of different brain regions associated with the limbic system. Catalyzes the sulfate conjugation of dopamine. Catalyzes the sulfation of T4 (L-thyroxine/3,5,3',5'-tetraiodothyronine), T3 (3,5,3'-triiodothyronine), rT3 (3,3',5'-triiodothyronine) and 3,3'-T2 (3,3'-diiodothyronine), with a substrate preference of 3,3'-T2 &gt; rT3 &gt; T3 &gt; T4. The protein is Sulfotransferase 1A1 (SULT1A1) of Macaca fascicularis (Crab-eating macaque).